Consider the following 215-residue polypeptide: uncharacterized protein (215 aa).

2 helical membrane passes run 40-60 and 72-92; these read VLFPIPVFCSIKVLLDYFCSL and LIWFYVLSVILCKSLFAVGYL.

The protein resides in the mitochondrion membrane. This is an uncharacterized protein from Arabidopsis thaliana (Mouse-ear cress).